A 369-amino-acid polypeptide reads, in one-letter code: 2-aminoethylphosphonate--pyruvate transaminase (369 aa).

K193 carries the N6-(pyridoxal phosphate)lysine modification.

Belongs to the class-V pyridoxal-phosphate-dependent aminotransferase family. PhnW subfamily. Homodimer. The cofactor is pyridoxal 5'-phosphate.

It carries out the reaction (2-aminoethyl)phosphonate + pyruvate = phosphonoacetaldehyde + L-alanine. Its function is as follows. Involved in phosphonate degradation. This chain is 2-aminoethylphosphonate--pyruvate transaminase, found in Burkholderia pseudomallei (strain 1106a).